The sequence spans 304 residues: GDP-6-deoxy-D-mannose reductase (304 aa).

Residues phenylalanine 13 to valine 14 and aspartate 39 to leucine 40 contribute to the NADP(+) site. Serine 105–glycine 106 is a binding site for substrate. An NADP(+)-binding site is contributed by tyrosine 131. Residues asparagine 160, arginine 200, and arginine 260 to glutamate 263 each bind substrate.

This sequence belongs to the NAD(P)-dependent epimerase/dehydratase family. GDP-6-deoxy-D-mannose reductase subfamily.

It carries out the reaction GDP-alpha-D-rhamnose + NAD(+) = GDP-4-dehydro-alpha-D-rhamnose + NADH + H(+). The catalysed reaction is GDP-alpha-D-rhamnose + NADP(+) = GDP-4-dehydro-alpha-D-rhamnose + NADPH + H(+). In terms of biological role, reductase that catalyzes the conversion of GDP-6-deoxy-D-mannose to GDP-4-dehydro-6-deoxy-D-mannose (GDP-D-rhamnose). In Pseudomonas aeruginosa (strain ATCC 15692 / DSM 22644 / CIP 104116 / JCM 14847 / LMG 12228 / 1C / PRS 101 / PAO1), this protein is GDP-6-deoxy-D-mannose reductase (rmd).